Consider the following 282-residue polypeptide: 2-dehydro-3-deoxyphosphooctonate aldolase (282 aa).

It belongs to the KdsA family.

It localises to the cytoplasm. It catalyses the reaction D-arabinose 5-phosphate + phosphoenolpyruvate + H2O = 3-deoxy-alpha-D-manno-2-octulosonate-8-phosphate + phosphate. It participates in carbohydrate biosynthesis; 3-deoxy-D-manno-octulosonate biosynthesis; 3-deoxy-D-manno-octulosonate from D-ribulose 5-phosphate: step 2/3. It functions in the pathway bacterial outer membrane biogenesis; lipopolysaccharide biosynthesis. This chain is 2-dehydro-3-deoxyphosphooctonate aldolase, found in Bartonella bacilliformis (strain ATCC 35685 / KC583 / Herrer 020/F12,63).